A 588-amino-acid polypeptide reads, in one-letter code: MSTLSDSDTETEVVSRNLCGIVDIGSNGIRFSISSKAAHHARIMPCVFKDRVGLSLYEVQYNTHTNAKCPIPRDIIKEVCSAMKRFKLICDDFGVPETSVRVIATEATRDAINADEFVNAVYGSTGWKVEILGQEDETRVGIYGVVSSFNTVRGLYLDVAGGSTQLSWVISSHGEVKQSSKPVSLPYGAGTLLRRMRTDDNRALFYEIKEAYKDAIEKIGIPQEMIDDAKKEGGFDLWTRGGGLRGMGHLLLYQSEGYPIQTIINGYACTYEEFSSMSDYLFLKQKIPGSSKEHKIFKVSDRRALQLPAVGLFMSAVFEAIPQIKAVHFSEGGVREGSLYSLLPKEIRAQDPLLIASRPYAPLLTEKYLYLLRTSIPQEDIPEIVNERIAPALCNLAFVHASYPKELQPTAALHVATRGIIAGCHGLSHRARALIGIALCSRWGGNIPESEEKYSQELEQVVLREGDKAEALRIVWWTKYIGTIMYVICGVHPGGNIRDNVFDFHVSKRSEVETSLKELIIDDANTTKVKEESTRKNRGYEVVVRISKDDLKTSASVRSRIITLQKKVRKLSRGSVERVKIGVQFYEE.

Belongs to the GppA/Ppx family.

Required for a novel path of interorganelle communication between mitochondria, peroxisomes and the nucleus, thereby maintaining a functional metabolic interaction between the tricarboxylic acid and glyoxylate cycles. In particular, required for the retrograde expression of the peroxisomal isoform of citrate synthase, CIT2. This is Retrograde regulation protein 2 (RTG2) from Saccharomyces cerevisiae (strain ATCC 204508 / S288c) (Baker's yeast).